The sequence spans 177 residues: Large ribosomal subunit protein uL6 (177 aa).

This sequence belongs to the universal ribosomal protein uL6 family. In terms of assembly, part of the 50S ribosomal subunit.

In terms of biological role, this protein binds to the 23S rRNA, and is important in its secondary structure. It is located near the subunit interface in the base of the L7/L12 stalk, and near the tRNA binding site of the peptidyltransferase center. In Rickettsia canadensis (strain McKiel), this protein is Large ribosomal subunit protein uL6.